A 365-amino-acid polypeptide reads, in one-letter code: Phospho-N-acetylmuramoyl-pentapeptide-transferase (365 aa).

10 helical membrane passes run 22–42, 74–94, 95–115, 134–154, 168–188, 201–221, 240–260, 267–287, 292–312, and 342–362; these read YISV…LALG, TMGG…WGNL, TSIY…IGFF, KFAL…YLLS, SLYI…IING, GLAI…AYIE, LAEV…FLWF, VFMG…IAVM, LIFF…MLQV, and KVVI…FAAI.

This sequence belongs to the glycosyltransferase 4 family. MraY subfamily. Mg(2+) serves as cofactor.

Its subcellular location is the cell inner membrane. It carries out the reaction UDP-N-acetyl-alpha-D-muramoyl-L-alanyl-gamma-D-glutamyl-meso-2,6-diaminopimeloyl-D-alanyl-D-alanine + di-trans,octa-cis-undecaprenyl phosphate = di-trans,octa-cis-undecaprenyl diphospho-N-acetyl-alpha-D-muramoyl-L-alanyl-D-glutamyl-meso-2,6-diaminopimeloyl-D-alanyl-D-alanine + UMP. It functions in the pathway cell wall biogenesis; peptidoglycan biosynthesis. Functionally, catalyzes the initial step of the lipid cycle reactions in the biosynthesis of the cell wall peptidoglycan: transfers peptidoglycan precursor phospho-MurNAc-pentapeptide from UDP-MurNAc-pentapeptide onto the lipid carrier undecaprenyl phosphate, yielding undecaprenyl-pyrophosphoryl-MurNAc-pentapeptide, known as lipid I. The protein is Phospho-N-acetylmuramoyl-pentapeptide-transferase of Francisella tularensis subsp. holarctica (strain OSU18).